Consider the following 315-residue polypeptide: MTTTVPKIFAFHEFSDVAEAVADHVVHAQDGALAPKNERKHSVPNISMNALDMTREASCKSTASAAEGKSGSSGSGSGSSKPKKEKRFKIALSGGSLIEVLHEGLLKRDDVRWGDWDIYFADERLVPFSSNESNYGCAKRKILDLIDTAKYGTPKVYHIDESLIDDPQECADNYEKVLIRGFAGRDSVKLPMFDLFLLGCAPDGHIASLFPNFQDNLREKLAWVVPVENAPSGPSTRISLTIPVICHSHRVTFVVEGATKAPIIKTIMERPEKGLPSSIVNEGAAGRVSWFVDDDALTDVLVTKKKYKFHQGLSI.

Residues S42 and S64 each carry the phosphoserine modification. Positions C59–E85 are disordered. A compositionally biased stretch (low complexity) spans K60–S70.

It belongs to the glucosamine/galactosamine-6-phosphate isomerase family. 6-phosphogluconolactonase subfamily.

Its subcellular location is the cytoplasm. May be involved in regulation of tRNA subcellular distribution. In Saccharomyces cerevisiae (strain ATCC 204508 / S288c) (Baker's yeast), this protein is 6-phosphogluconolactonase-like protein 2 (SOL2).